The primary structure comprises 473 residues: GTPase Der (473 aa).

EngA-type G domains are found at residues F3 to R167 and L203 to N378. Residues G9–S16, D56–L60, N119–E122, G209–S216, D256–M260, and N321–D324 each bind GTP. In terms of domain architecture, KH-like spans K379–D463.

It belongs to the TRAFAC class TrmE-Era-EngA-EngB-Septin-like GTPase superfamily. EngA (Der) GTPase family. As to quaternary structure, associates with the 50S ribosomal subunit.

Its function is as follows. GTPase that plays an essential role in the late steps of ribosome biogenesis. The sequence is that of GTPase Der from Rhizobium etli (strain ATCC 51251 / DSM 11541 / JCM 21823 / NBRC 15573 / CFN 42).